A 332-amino-acid polypeptide reads, in one-letter code: tRNA U34 carboxymethyltransferase (332 aa).

Carboxy-S-adenosyl-L-methionine is bound by residues K96, W110, K115, G135, 186–187 (LE), M204, Y208, and R323.

It belongs to the class I-like SAM-binding methyltransferase superfamily. CmoB family. In terms of assembly, homotetramer.

It catalyses the reaction carboxy-S-adenosyl-L-methionine + 5-hydroxyuridine(34) in tRNA = 5-carboxymethoxyuridine(34) in tRNA + S-adenosyl-L-homocysteine + H(+). Its function is as follows. Catalyzes carboxymethyl transfer from carboxy-S-adenosyl-L-methionine (Cx-SAM) to 5-hydroxyuridine (ho5U) to form 5-carboxymethoxyuridine (cmo5U) at position 34 in tRNAs. The chain is tRNA U34 carboxymethyltransferase from Hydrogenovibrio crunogenus (strain DSM 25203 / XCL-2) (Thiomicrospira crunogena).